Consider the following 406-residue polypeptide: 3-oxoacyl-[acyl-carrier-protein] synthase 1 (406 aa).

The region spanning 1–403 (MKRAVITGLG…GTNATLVMRK (403 aa)) is the Ketosynthase family 3 (KS3) domain. Residues Cys163, His298, and His333 each act as for beta-ketoacyl synthase activity in the active site.

The protein belongs to the thiolase-like superfamily. Beta-ketoacyl-ACP synthases family. As to quaternary structure, homodimer.

The protein resides in the cytoplasm. The enzyme catalyses a fatty acyl-[ACP] + malonyl-[ACP] + H(+) = a 3-oxoacyl-[ACP] + holo-[ACP] + CO2. It carries out the reaction (3Z)-decenoyl-[ACP] + malonyl-[ACP] + H(+) = 3-oxo-(5Z)-dodecenoyl-[ACP] + holo-[ACP] + CO2. It participates in lipid metabolism; fatty acid biosynthesis. Its function is as follows. Involved in the type II fatty acid elongation cycle. Catalyzes the elongation of a wide range of acyl-ACP by the addition of two carbons from malonyl-ACP to an acyl acceptor. Can also use unsaturated fatty acids. Catalyzes a key reaction in unsaturated fatty acid (UFA) synthesis, the elongation of the cis-3-decenoyl-ACP produced by FabA. The protein is 3-oxoacyl-[acyl-carrier-protein] synthase 1 (fabB) of Escherichia coli O6:H1 (strain CFT073 / ATCC 700928 / UPEC).